We begin with the raw amino-acid sequence, 363 residues long: NAD(P)H-quinone oxidoreductase subunit 1, chloroplastic (363 aa).

Transmembrane regions (helical) follow at residues 30 to 50, 104 to 124, 129 to 149, 248 to 268, 269 to 289, 300 to 320, and 336 to 356; these read FIPI…IVWL, IAVI…HLVL, IGVF…LMSG, YSGI…LVSS, LFVT…IFVF, VFEP…FLFI, and LLNL…LLTT.

The protein belongs to the complex I subunit 1 family. NDH is composed of at least 16 different subunits, 5 of which are encoded in the nucleus.

Its subcellular location is the plastid. The protein resides in the chloroplast thylakoid membrane. The catalysed reaction is a plastoquinone + NADH + (n+1) H(+)(in) = a plastoquinol + NAD(+) + n H(+)(out). The enzyme catalyses a plastoquinone + NADPH + (n+1) H(+)(in) = a plastoquinol + NADP(+) + n H(+)(out). NDH shuttles electrons from NAD(P)H:plastoquinone, via FMN and iron-sulfur (Fe-S) centers, to quinones in the photosynthetic chain and possibly in a chloroplast respiratory chain. The immediate electron acceptor for the enzyme in this species is believed to be plastoquinone. Couples the redox reaction to proton translocation, and thus conserves the redox energy in a proton gradient. The chain is NAD(P)H-quinone oxidoreductase subunit 1, chloroplastic from Morus indica (Mulberry).